The chain runs to 2021 residues: Fanconi anemia group M protein homolog (2021 aa).

Position 30 is a phosphoserine (S30). Residues 86–254 (ISRSALFCNT…QVITNLLIGK (169 aa)) form the Helicase ATP-binding domain. Position 99 to 106 (99 to 106 (LPTGLGKT)) interacts with ATP. Residues 202–205 (DEAH) carry the DEAH box motif. Residues 437–612 (KLEEVILEHF…VLRLYQGSPR (176 aa)) form the Helicase C-terminal domain. Disordered regions lie at residues 638–657 (RSVQ…SKSN), 837–886 (PCRA…RMAD), 1002–1049 (CSPY…LPGT), 1244–1273 (GAAD…AISP), 1296–1319 (ASSS…SSKT), 1369–1441 (PRRT…RTCP), 1447–1466 (KGRN…RSQV), 1615–1700 (NKKQ…QPSI), and 1712–1732 (AQSH…ESRK). A compositionally biased stretch (polar residues) spans 1018–1035 (ASHSAGNSQQNLESNSAK). A compositionally biased stretch (basic and acidic residues) spans 1249 to 1259 (SGRHSDKEIKD). Residues 1370 to 1379 (RRTEVEHLTS) are compositionally biased toward basic and acidic residues. Positions 1388–1397 (RKTKKPKRNV) are enriched in basic residues. A Phosphoserine modification is found at S1637. The span at 1669 to 1682 (SGPSGSSVPPQVLS) shows a compositional bias: low complexity. Residues 1684–1700 (PSWNQSSRQRLQVQPSI) show a composition bias toward polar residues. Positions 1689 to 2009 (SSRQRLQVQP…LNQERQKPDT (321 aa)) are interaction with FAAP24.

This sequence belongs to the DEAD box helicase family. DEAH subfamily. FANCM sub-subfamily. As to quaternary structure, component of the Fanconi anemia (FA) core complex, which consists of CENPS, CENPX, FANCA, FANCB, FANCC, FANCE, FANCF, FANCG, FANCL, FANCM, FAAP24 and FAAP100. The FA core complex associates with Bloom syndrome (BLM) complex, which consists of at least BLM, DNA topoisomerase 3-alpha/TOP3A, RMI1/BLAP75, RPA1/RPA70 and RPA2/RPA32. This supercomplex between FA and BLM complexes has been called BRAFT. Forms a discrete complex with CENPS and CENPX, called FANCM-MHF; this interaction stimulates DNA binding and replication fork remodeling by FANCM and stabilizes the binding partners. Forms a heterodimer with FAAP24; this interaction increases FANCM single-stranded DNA-binding activity. In terms of processing, phosphorylated; hyperphosphorylated in response to genotoxic stress.

It is found in the nucleus. It carries out the reaction ATP + H2O = ADP + phosphate + H(+). DNA-dependent ATPase component of the Fanconi anemia (FA) core complex. Required for the normal activation of the FA pathway, leading to monoubiquitination of the FANCI-FANCD2 complex in response to DNA damage, cellular resistance to DNA cross-linking drugs, and prevention of chromosomal breakage. In complex with CENPS and CENPX, binds double-stranded DNA (dsDNA), fork-structured DNA (fsDNA) and Holliday junction substrates. Its ATP-dependent DNA branch migration activity can process branched DNA structures such as a movable replication fork. This activity is strongly stimulated in the presence of CENPS and CENPX. In complex with FAAP24, efficiently binds to single-strand DNA (ssDNA), splayed-arm DNA, and 3'-flap substrates. In vitro, on its own, strongly binds ssDNA oligomers and weakly fsDNA, but does not bind to dsDNA. The protein is Fanconi anemia group M protein homolog (Fancm) of Mus musculus (Mouse).